A 785-amino-acid chain; its full sequence is Hypha-specific G1 cyclin-related protein 1 (785 aa).

Positions 1–42 (MINITKPLTPKSISQQKQQQQHPYKNISTTKSNNNPQASGSK) are disordered. The segment covering 22 to 42 (HPYKNISTTKSNNNPQASGSK) has biased composition (polar residues). A Cyclin N-terminal domain is found at 71-238 (DIYDIMVNLI…VLNTLEWSLN (168 aa)). Disordered regions lie at residues 408–433 (TTTT…TTPV), 447–679 (VSST…SKFN), and 750–774 (NNSG…DSPI). Composition is skewed to low complexity over residues 447-473 (VSST…STTP) and 484-512 (NYSN…NNTT). Residues 513-535 (ISPVDSTTINSHTKNSSQLNYQY) show a composition bias toward polar residues. Low complexity predominate over residues 579-613 (NSANKNSNKSNSANNNNTTTIATTTTTTTNNNNNS). The segment covering 621–631 (LSYNNYFNSPN) has biased composition (polar residues). Positions 646 to 679 (QQQQQNQGQNQQQPLQLYQGDNNNNGTNTNSKFN) are enriched in low complexity. A compositionally biased stretch (gly residues) spans 754-764 (NGKGNGNGGSG). Polar residues predominate over residues 765-774 (TPISENDSPI).

This sequence belongs to the cyclin family. In terms of assembly, interacts with CDC28.

Functionally, hypha-specific G1 cyclin-related protein involved in regulation of morphogenesis and opaque cells filamentous growth, and required for both conventional and pheromone-stimulated biofilm formation. Required to maintain hyphal tip localization of actin and SPA2. Regulates the CDC28 kinase during hyphal growth. The CDC28-HGC1 complex phosphorylates and prevents RGA2 from localizing to hyphal tips, leading to localized CDC42 activation for hyphal extension. The CDC28-HGC1 complex also phosphorylates SEC2 and maintains CDC11 phosphorylation throughout hyphal growth. Moreover CDC28-HGC1 phosphorylation of EFG1 represses cell separation genes during hyphal growth. Also partially controls SEP7 phosphorylation status and subsequent septin ring dynamics. Required for virulence and especially mediates dynamic adhesion to endothelium of blood vessels during circulation. The protein is Hypha-specific G1 cyclin-related protein 1 (HGC1) of Candida albicans (strain SC5314 / ATCC MYA-2876) (Yeast).